The following is a 37-amino-acid chain: Esculentin-2Ra (37 aa).

A disulfide bridge links cysteine 31 with cysteine 37.

In terms of tissue distribution, expressed by the skin glands.

It localises to the secreted. Functionally, antimicrobial peptide. In Pelophylax ridibundus (Marsh frog), this protein is Esculentin-2Ra.